The following is a 439-amino-acid chain: Sodium-dependent phosphate transport protein 3 (439 aa).

Asparagine 47, asparagine 56, asparagine 68, and asparagine 69 each carry an N-linked (GlcNAc...) asparagine glycan. Transmembrane regions (helical) follow at residues 98–118 (INYG…IFGA), 130–150 (SLLT…VIMV), 183–203 (TIAG…GGLI), 211–231 (FIFY…FTVI), 273–293 (LPLW…TIIL), 317–337 (LPFI…DFLL), 350–369 (LFSS…LPFV), 374–396 (VITI…GFII), and 415–435 (GFGL…ISQV).

The protein belongs to the major facilitator superfamily. Sodium/anion cotransporter family. In terms of tissue distribution, expressed in the small intestine, kidney, spleen and testis. Not detected in fetal brain, bone marrow, and mammary gland.

Its subcellular location is the apical cell membrane. The catalysed reaction is 3 Na(+)(out) + phosphate(out) = 3 Na(+)(in) + phosphate(in). It catalyses the reaction urate(out) + n chloride(in) = urate(in) + n chloride(out). In terms of biological role, acts as a membrane potential-dependent organic anion transporter, the transport requires a low concentration of chloride ions. Mediates chloride-dependent transport of urate. Can actively transport inorganic phosphate into cells via Na(+) cotransport. This chain is Sodium-dependent phosphate transport protein 3 (SLC17A2), found in Homo sapiens (Human).